Reading from the N-terminus, the 332-residue chain is Ribosomal RNA small subunit methyltransferase H (332 aa).

S-adenosyl-L-methionine is bound by residues 34-36 (GGH), D59, F86, D112, and Q119.

Belongs to the methyltransferase superfamily. RsmH family.

The protein resides in the cytoplasm. The enzyme catalyses cytidine(1402) in 16S rRNA + S-adenosyl-L-methionine = N(4)-methylcytidine(1402) in 16S rRNA + S-adenosyl-L-homocysteine + H(+). Specifically methylates the N4 position of cytidine in position 1402 (C1402) of 16S rRNA. This chain is Ribosomal RNA small subunit methyltransferase H, found in Chlorobium phaeobacteroides (strain BS1).